The sequence spans 299 residues: Cell division control protein 16 (299 aa).

In terms of domain architecture, Rab-GAP TBC spans 41–223 (GGNSSTRPYV…TIWDFLFAYG (183 aa)).

This sequence belongs to the BUB2 family.

It localises to the cytoplasm. It is found in the cytoskeleton. The protein localises to the microtubule organizing center. Its subcellular location is the spindle pole body. Has a dual role in the cell cycle. In mitosis, it is involved in maintenance of cdc2 kinase activity. It is subsequently required for regulation of septum formation. Could be involved in maintenance of cdc2 kinase activity by preventing, directly or indirectly, the degradation of cyclin or the dephosphorylation of 'Thr-167' of cdc2. The sequence is that of Cell division control protein 16 (cdc16) from Schizosaccharomyces pombe (strain 972 / ATCC 24843) (Fission yeast).